A 659-amino-acid chain; its full sequence is Fructose-1,6-bisphosphatase class 3 (659 aa).

It belongs to the FBPase class 3 family. Mn(2+) is required as a cofactor.

It catalyses the reaction beta-D-fructose 1,6-bisphosphate + H2O = beta-D-fructose 6-phosphate + phosphate. The protein operates within carbohydrate biosynthesis; gluconeogenesis. This Clostridium botulinum (strain Alaska E43 / Type E3) protein is Fructose-1,6-bisphosphatase class 3.